Here is a 128-residue protein sequence, read N- to C-terminus: Large ribosomal subunit protein bL12 (128 aa).

This sequence belongs to the bacterial ribosomal protein bL12 family. In terms of assembly, homodimer. Part of the ribosomal stalk of the 50S ribosomal subunit. Forms a multimeric L10(L12)X complex, where L10 forms an elongated spine to which 2 to 4 L12 dimers bind in a sequential fashion. Binds GTP-bound translation factors.

Functionally, forms part of the ribosomal stalk which helps the ribosome interact with GTP-bound translation factors. Is thus essential for accurate translation. In Desulfovibrio desulfuricans (strain ATCC 27774 / DSM 6949 / MB), this protein is Large ribosomal subunit protein bL12.